Here is a 305-residue protein sequence, read N- to C-terminus: Spore coat protein CotA (305 aa).

It localises to the spore coat. Its subcellular location is the spore. It is found in the perispore. In terms of biological role, contributes to maintain proper thickness of the spore coat. May contribute to the formation of polar appendages. May play an important role in assembly of the outer layers of the spore coat. The chain is Spore coat protein CotA from Clostridioides difficile (strain 630) (Peptoclostridium difficile).